Reading from the N-terminus, the 2130-residue chain is MAAAGEAIDGVYSVRLVIADFYMEKPQFGMDPCYSELRGKEIKRVPVIRVFGGNSRGQKTCMHVHGVFPYLYIPYDKKDFESLERGILQMAMHLDKAINISLGQGSSNAQHVFKIQLVKGIPFYGYHRVEHQFLKIYMFNPRFVRRAANLLQSGAILSKNFSPHESHVPYILQFMIDYNLYGMSYVHVPLEVLKFRRNHDDDVIPYANVKQAQLLDITTAKKVACSALEVDVSSNFILNRFQLVAKSKSNHTNPGIEAIWNDEKLRRQKLVEKHTDAGDEEKAEAVPVLELPPTQERHQIEIAESDIFYRTALESKLMTLEQSTLSEQTLSDQTILPQATMQTTMPGTKAQKRRFNLQKLLANAVYPEECSQDQQQLLVNASFIQNHVTCGYSSSVSLSTSKDESDDLDETVVDEELILSLTQPHGAIPHDATLREEDLELLDALQLLEEQNESESHVDLDSSLAPLSQHKKFELTPELLDKETAATAALFDEDVDSDEDADQETRHDFSTVLDDVDELLLKLTQSQPAESKELKASSKLPQIDGADDRLQRTPIKSISSKSKSSPSKTPTTPIGQKSLPKSPRTPKTSAAKKYAPLALTIGSSSSKKSNDEFAGRPSNPRLSLQLDQGTGTGTLRPEISLRKKLAMSEMRRKSFEDSFVLLKNDCTPVRSTRRSTSNLDKTHIICSLTPRDRNPGLSDMFETEDGKQLPPKKVVRKTRWSTRNQDIESLPKAGCEIERPHRSEGSALDELKPRRSARHKVNSANPDECSSEIQTTGPRVTTTSLDRPQKKARLSQSPKENTKTSMNGTVALEKATKDSSSNSESPHQQENSVSEQIEYLESKPKKSDETARSCDEKLQRELIPQEPAGISPGDSANSTEEITFSPCHDEAIESDTESDYIVTKLRKTPNLKRLRWSIRSELLNKQFTPSSGIRPPETETTPQLSPKSNESNTPELMRSFYEHSLIVNSPSVFSDFLDSPEIHMDSPRSAPPSPDSNSFVIAPLELPPSYDEVVSGSRKMDIPEYEFQKPYYSNPSDVSKVTEVGFLVLHIPGNKLNDCDPFQSILGNDRGLASWRRRQLIAIGGLAMLQRHRGEQKVREYFSTQQRIAIEPAQLAPTWQEAKIWLKAKELLRQREEPKKSSDDIDSPIKIKRQKITMMLQAEEGDGGSGDEDAGEELDCSLSLTPLSQAKDKCKATPTSSKARETGKSRLKRGTRLSFIGSQDEEPPSSQSSEQSVSSSAAQAELDRSSFLRQLEGSSQDRQHDLSFGLSHATLDNTFGFKVNLENLQQAKADIDCNHLTIITLEVFVSTRGDLQPDPMHDEIRCLFYAIEHSLPDEKLPSKACGYIMVNTVQDLLSEGPFHGIDRDIEVQVVTSEAEAFEALLALCERWDADIYAGYEIEMSSWGYVIDRAKHLCFNIAPLLSRVPTQKVRDFVDEDREQFTDLDVEMKLCGRILLDVWRLMRSEIALTSYTFENVMYHILHKRCPWHTAKSLTEWFGSPCTRWIVMEYYLERVRGTLTLLDQLDLLGRTSEMAKLIGIQFYEVLSRGSQFRVESMMLRIAKPKNLVPLSPSVQARAHMRAPEYLALIMEPQSRFYADPLIVLDFQSLYPSMIIAYNYCFSTCLGRVEHLGGSSPFEFGASQLRVSRQMLQKLLEHDLVTVSPCGVVFVKREVREGILPRMLTEILDTRQMVKQSMKLHKDSSALQRILHSRQLGLKLMANVTYGYTAANFSGRMPSVEVGDSVVSKGRETLERAIKLVENNEEWKVRVVYGDTDSMFVLVPGRNRAEAFRIGEEIAKAVTEMNPQPVKLKLEKVYQPCMLQTKKRYVGYMYETADQEQPVYEAKGIETVRRDGCPAVAKMLEKVLRILFETQDVSKIKAYVCRQFTKLLSGRANLQDLIFAKEFRGLNGYKPTACVPALELTRKWMQKDPRHVPRRGERVPFIIVNGPPGMQLIRLVRSPHDILANEGHKINAIYYITKAIIPPLNRCLLLIGANVHDWFASLPRKLLMTPAVGTANELAGARGAKSTISQYFSTTSCVIDCGRQTKAGICPDCLKNATTCVVVLSDKTARLERGYQLTRQICQACCGRLGSLQCDSLDCPVLYVLEGKRRELQQIEHWNKLLEHHF.

Disordered stretches follow at residues P528–L635, G734–A891, F927–P954, and Q1189–Q1243. The span at T553 to I574 shows a compositional bias: low complexity. A compositionally biased stretch (polar residues) spans P620–G629. The segment covering C735–P753 has biased composition (basic and acidic residues). Composition is skewed to polar residues over residues S771 to D786, L794 to G808, and D818 to E835. Over residues L840–R860 the composition is skewed to basic and acidic residues. A compositionally biased stretch (polar residues) spans T938 to P954. The span at P1228–Q1243 shows a compositional bias: low complexity. 4 residues coordinate Zn(2+): C2041, C2045, C2054, and C2057. Residues C2086, C2089, C2098, and C2103 each coordinate [4Fe-4S] cluster. A CysB motif motif is present at residues C2086–C2103.

Belongs to the DNA polymerase type-B family. As to quaternary structure, catalytic subunit of the zeta DNA polymerase complex, which consists of PolZ1/DNApol-zeta and the accessory component PolZ2/Rev7. Interacts with the apurinic/apyrimidinic (AP) endonuclease Rrp1; the interaction is likely indirect and mediated via PolZ2. [4Fe-4S] cluster is required as a cofactor.

It carries out the reaction DNA(n) + a 2'-deoxyribonucleoside 5'-triphosphate = DNA(n+1) + diphosphate. Inhibited by tetracyclic diterpene antibiotic aphidicolin. As the catalytic subunit of the DNA polymerase zeta complex, plays a crucial role in translesion DNA synthesis (TLS) and various DNA repair mechanisms. Lacks an intrinsic 3'-5' exonuclease activity and thus has no proofreading function. During homologous recombination (HR) repair, has a overlapping role with the error-prone translesion polymerase eta to initiate repair synthesis which is completed by end joining or another polymerase that can bind and reinitiate synthesis. May participate in the Rrp1-dependent base excision repair (BER) pathway responsible for repair of DNA lesions that gives rise to apurinic/apyrimidinic (AP) sites. Unlike mammalian orthologs, it is not an error-prone polymerase. The polypeptide is DNA polymerase zeta catalytic subunit (Drosophila melanogaster (Fruit fly)).